We begin with the raw amino-acid sequence, 402 residues long: UPF0261 protein BPP1817 (402 aa).

Belongs to the UPF0261 family.

This is UPF0261 protein BPP1817 from Bordetella parapertussis (strain 12822 / ATCC BAA-587 / NCTC 13253).